Reading from the N-terminus, the 389-residue chain is RHOMBOID-like protein 1 (389 aa).

The next 7 helical transmembrane spans lie at 56–76, 136–156, 163–183, 191–211, 221–241, 244–264, and 295–315; these read PWLV…SMFI, IWLH…IFIG, FGFV…SLLS, ISVG…SELL, FAAL…GILP, DNFA…VFLI, and VLWI…LVVL. The active-site Nucleophile is Ser196. The Charge relay system role is filled by His248.

This sequence belongs to the peptidase S54 family. As to expression, expressed in roots, seedlings, leaves, stems and flowers.

The protein resides in the golgi apparatus membrane. It catalyses the reaction Cleaves type-1 transmembrane domains using a catalytic dyad composed of serine and histidine that are contributed by different transmembrane domains.. Its function is as follows. Probable rhomboid-type serine protease that catalyzes intramembrane proteolysis. Unable to cleave the Drosophila protein Spitz. In Arabidopsis thaliana (Mouse-ear cress), this protein is RHOMBOID-like protein 1.